The following is a 117-amino-acid chain: NADH-ubiquinone oxidoreductase chain 3 (117 aa).

The next 3 membrane-spanning stretches (helical) occupy residues 4 to 24, 57 to 77, and 88 to 108; these read ILIY…LGLI, FFLL…LLPL, and WPLT…FHEW.

This sequence belongs to the complex I subunit 3 family.

Its subcellular location is the mitochondrion membrane. The catalysed reaction is a ubiquinone + NADH + 5 H(+)(in) = a ubiquinol + NAD(+) + 4 H(+)(out). Its function is as follows. Core subunit of the mitochondrial membrane respiratory chain NADH dehydrogenase (Complex I) that is believed to belong to the minimal assembly required for catalysis. Complex I functions in the transfer of electrons from NADH to the respiratory chain. The immediate electron acceptor for the enzyme is believed to be ubiquinone. This is NADH-ubiquinone oxidoreductase chain 3 (ND3) from Heterololigo bleekeri (Spear squid).